A 187-amino-acid polypeptide reads, in one-letter code: UPF0301 protein YqgE (187 aa).

This sequence belongs to the UPF0301 (AlgH) family.

The protein is UPF0301 protein YqgE of Escherichia coli O7:K1 (strain IAI39 / ExPEC).